A 359-amino-acid polypeptide reads, in one-letter code: Small ribosomal subunit protein mS22 (359 aa).

It belongs to the mitochondrion-specific ribosomal protein mS22 family. Component of the mitochondrial ribosome small subunit (28S) which comprises a 12S rRNA and about 30 distinct proteins.

It is found in the mitochondrion. This chain is Small ribosomal subunit protein mS22 (MRPS22), found in Bos taurus (Bovine).